The following is a 211-amino-acid chain: Heat shock 70 kDa protein 4L (211 aa).

Serine 161 is modified (phosphoserine).

It belongs to the heat shock protein 70 family. As to quaternary structure, homodimer.

It localises to the cytoplasm. The protein localises to the nucleus. In terms of biological role, possesses chaperone activity in vitro where it inhibits aggregation of citrate synthase. The sequence is that of Heat shock 70 kDa protein 4L from Mesocricetus auratus (Golden hamster).